The chain runs to 477 residues: Bifunctional protein HldE (477 aa).

The tract at residues 1 to 319 is ribokinase; the sequence is MKITLPPFDQ…RALQEQEQSG (319 aa). Position 195–198 (195–198) interacts with ATP; it reads NLAE. Residue aspartate 264 is part of the active site. The cytidylyltransferase stretch occupies residues 344-477; it reads MTNGCFDLLH…IERMQSAPDT (134 aa).

The protein in the N-terminal section; belongs to the carbohydrate kinase PfkB family. In the C-terminal section; belongs to the cytidylyltransferase family. As to quaternary structure, homodimer.

The catalysed reaction is D-glycero-beta-D-manno-heptose 7-phosphate + ATP = D-glycero-beta-D-manno-heptose 1,7-bisphosphate + ADP + H(+). It catalyses the reaction D-glycero-beta-D-manno-heptose 1-phosphate + ATP + H(+) = ADP-D-glycero-beta-D-manno-heptose + diphosphate. It functions in the pathway nucleotide-sugar biosynthesis; ADP-L-glycero-beta-D-manno-heptose biosynthesis; ADP-L-glycero-beta-D-manno-heptose from D-glycero-beta-D-manno-heptose 7-phosphate: step 1/4. It participates in nucleotide-sugar biosynthesis; ADP-L-glycero-beta-D-manno-heptose biosynthesis; ADP-L-glycero-beta-D-manno-heptose from D-glycero-beta-D-manno-heptose 7-phosphate: step 3/4. Functionally, catalyzes the phosphorylation of D-glycero-D-manno-heptose 7-phosphate at the C-1 position to selectively form D-glycero-beta-D-manno-heptose-1,7-bisphosphate. In terms of biological role, catalyzes the ADP transfer from ATP to D-glycero-beta-D-manno-heptose 1-phosphate, yielding ADP-D-glycero-beta-D-manno-heptose. The polypeptide is Bifunctional protein HldE (Alkalilimnicola ehrlichii (strain ATCC BAA-1101 / DSM 17681 / MLHE-1)).